The chain runs to 152 residues: UPF0756 membrane protein CA_C0092 (152 aa).

4 consecutive transmembrane segments (helical) span residues 5–25, 50–70, 82–102, and 117–137; these read IILV…VAIS, MFWG…QGNV, FVGI…GVGL, and LILG…GPLI.

It belongs to the UPF0756 family.

It is found in the cell membrane. This Clostridium acetobutylicum (strain ATCC 824 / DSM 792 / JCM 1419 / IAM 19013 / LMG 5710 / NBRC 13948 / NRRL B-527 / VKM B-1787 / 2291 / W) protein is UPF0756 membrane protein CA_C0092.